The chain runs to 452 residues: Glycine receptor subunit alpha-2 (452 aa).

Positions 1 to 27 (MNRQLVNILTALFAFFLGTNHFREAFC) are cleaved as a signal peptide. Topologically, residues 28–256 (KDHDSRSGKH…KFHLERQMGY (229 aa)) are extracellular. A glycan (N-linked (GlcNAc...) asparagine) is linked at asparagine 72. A glycine-binding site is contributed by arginine 99. A strychnine-binding site is contributed by arginine 99. N-linked (GlcNAc...) asparagine glycosylation occurs at asparagine 103. Serine 163 lines the glycine pocket. Cysteine 172 and cysteine 186 are oxidised to a cystine. Zn(2+) is bound by residues glutamate 226 and glutamate 228. A disulfide bridge links cysteine 232 with cysteine 243. Position 238 (threonine 238) interacts with glycine. Histidine 249 contributes to the Zn(2+) binding site. Residues 257 to 278 (YLIQMYIPSLLIVILSWVSFWI) traverse the membrane as a helical segment. Topologically, residues 279-283 (NMDAA) are cytoplasmic. The helical transmembrane segment at 284–304 (PARVALGITTVLTMTTQSSGS) threads the bilayer. Over 305-315 (RASLPKVSYVK) the chain is Extracellular. The chain crosses the membrane as a helical span at residues 316–336 (AIDIWMAVCLLFVFAALLEYA). Topologically, residues 337 to 420 (AVNFVSRQHK…FVDRAKRIDT (84 aa)) are cytoplasmic. A helical membrane pass occupies residues 421 to 441 (ISRAAFPLAFLIFNIFYWITY). Residues 442-452 (KIIRHEDVHKK) are Extracellular-facing.

This sequence belongs to the ligand-gated ion channel (TC 1.A.9) family. Glycine receptor (TC 1.A.9.3) subfamily. GLRA2 sub-subfamily. Interacts with GLRB. Heteropentamer composed of GLRA2 and GLRB; functional GLRB-GLRA2 heteropentamers contain four GLRA2 subunits and one GLRB subunit, although alternative subunit composition cannot be excluded. Homopentamer (in vitro). Both homopentamers and heteropentamers form functional ion channels, but their characteristics are subtly different.

Its subcellular location is the postsynaptic cell membrane. It localises to the synapse. It is found in the cell membrane. The protein resides in the cell projection. It carries out the reaction chloride(in) = chloride(out). Channel opening is triggered by extracellular glycine. Channel opening is also triggered by taurine and beta-alanine. Inhibited by strychnine. Inhibited by picrotoxin. Its function is as follows. Subunit of heteromeric glycine-gated chloride channels. Plays a role in synaptic plasticity. Contributes to the generation of inhibitory postsynaptic currents, and is involved in the down-regulation of neuronal excitability. Plays a role in cellular responses to ethanol. The protein is Glycine receptor subunit alpha-2 of Rattus norvegicus (Rat).